Consider the following 162-residue polypeptide: Lymphocyte antigen 86 (162 aa).

Positions 1–20 are cleaved as a signal peptide; the sequence is MKGFTATLFLWTLIFPSCSG. Disulfide bonds link Cys33-Cys58, Cys45-Cys154, and Cys102-Cys112. Asn96 is a glycosylation site (N-linked (GlcNAc...) asparagine). An N-linked (GlcNAc...) asparagine glycan is attached at Asn156.

M-shaped tetramer of two CD180-LY86 heterodimers. As to expression, highly expressed in B-cells, monocytes and tonsil.

It is found in the secreted. The protein resides in the extracellular space. Functionally, may cooperate with CD180 and TLR4 to mediate the innate immune response to bacterial lipopolysaccharide (LPS) and cytokine production. Important for efficient CD180 cell surface expression. The sequence is that of Lymphocyte antigen 86 (LY86) from Homo sapiens (Human).